We begin with the raw amino-acid sequence, 387 residues long: 3-ketoacyl-CoA thiolase (387 aa).

The active-site Acyl-thioester intermediate is Cys91. Residues His343 and Cys373 each act as proton acceptor in the active site.

This sequence belongs to the thiolase-like superfamily. Thiolase family. As to quaternary structure, heterotetramer of two alpha chains (FadB) and two beta chains (FadA).

It localises to the cytoplasm. It carries out the reaction an acyl-CoA + acetyl-CoA = a 3-oxoacyl-CoA + CoA. It participates in lipid metabolism; fatty acid beta-oxidation. Catalyzes the final step of fatty acid oxidation in which acetyl-CoA is released and the CoA ester of a fatty acid two carbons shorter is formed. The protein is 3-ketoacyl-CoA thiolase of Shigella boydii serotype 4 (strain Sb227).